Consider the following 407-residue polypeptide: Peptidase T (407 aa).

His-78 contacts Zn(2+). Asp-80 is a catalytic residue. A Zn(2+)-binding site is contributed by Asp-139. Catalysis depends on Glu-173, which acts as the Proton acceptor. Residues Glu-174, Asp-196, and His-378 each coordinate Zn(2+).

It belongs to the peptidase M20B family. The cofactor is Zn(2+).

Its subcellular location is the cytoplasm. It catalyses the reaction Release of the N-terminal residue from a tripeptide.. Its function is as follows. Cleaves the N-terminal amino acid of tripeptides. This is Peptidase T from Shewanella pealeana (strain ATCC 700345 / ANG-SQ1).